Reading from the N-terminus, the 802-residue chain is Leucine--tRNA ligase (802 aa).

The short motif at 40-51 (PYPSGAGLHVGH) is the 'HIGH' region element. The 'KMSKS' region signature appears at 576 to 580 (KMSKS). ATP is bound at residue Lys-579.

Belongs to the class-I aminoacyl-tRNA synthetase family.

It is found in the cytoplasm. The catalysed reaction is tRNA(Leu) + L-leucine + ATP = L-leucyl-tRNA(Leu) + AMP + diphosphate. The polypeptide is Leucine--tRNA ligase (Bacillus cytotoxicus (strain DSM 22905 / CIP 110041 / 391-98 / NVH 391-98)).